A 703-amino-acid polypeptide reads, in one-letter code: Neoverrucotoxin subunit alpha (703 aa).

Ser2 carries the N-acetylserine modification. The B30.2/SPRY domain occupies 508-703 (PRMPFVQGYK…RFDHGTVRLL (196 aa)).

The protein belongs to the SNTX/VTX toxin family. Heterodimer of alpha and beta subunits. Post-translationally, not glycosylated. Four intrachain disulfide linkages are present in the heterodimer. No interchain disulfide bound links the two subunits. Expressed by the venom gland.

Its subcellular location is the secreted. Its function is as follows. Has hemolytic and lethal activities. Its hemolytic activity is inhibited by anionic lipids, especially potently by cardiolipin. The chain is Neoverrucotoxin subunit alpha from Synanceia verrucosa (Reef stonefish).